A 346-amino-acid polypeptide reads, in one-letter code: NADH-ubiquinone oxidoreductase chain 2 (346 aa).

10 consecutive transmembrane segments (helical) span residues 25–45 (NLLL…PLLA), 56–76 (ATKY…VIIL), 94–114 (LLNM…FHYW), 122–142 (IPLH…LSIL), 148–168 (LLNP…GAWG), 178–198 (IMAY…PYNP), 200–220 (LTLL…ITLM), 240–260 (ILTM…LTGF), 278–298 (LSTL…RLIY), and 325–345 (FILP…SQLI).

This sequence belongs to the complex I subunit 2 family. In terms of assembly, core subunit of respiratory chain NADH dehydrogenase (Complex I) which is composed of 45 different subunits. Interacts with TMEM242.

It localises to the mitochondrion inner membrane. It catalyses the reaction a ubiquinone + NADH + 5 H(+)(in) = a ubiquinol + NAD(+) + 4 H(+)(out). Its function is as follows. Core subunit of the mitochondrial membrane respiratory chain NADH dehydrogenase (Complex I) which catalyzes electron transfer from NADH through the respiratory chain, using ubiquinone as an electron acceptor. Essential for the catalytic activity and assembly of complex I. This chain is NADH-ubiquinone oxidoreductase chain 2, found in Rattus norvegicus (Rat).